Consider the following 85-residue polypeptide: Large ribosomal subunit protein bL27 (85 aa).

The tract at residues methionine 1 to leucine 21 is disordered.

Belongs to the bacterial ribosomal protein bL27 family.

This chain is Large ribosomal subunit protein bL27, found in Nitratiruptor sp. (strain SB155-2).